A 156-amino-acid chain; its full sequence is ATP synthase subunit b (156 aa).

Residues 3–23 form a helical membrane-spanning segment; sequence ITLTIFAQALAFAGLIWIVAT.

The protein belongs to the ATPase B chain family. In terms of assembly, F-type ATPases have 2 components, F(1) - the catalytic core - and F(0) - the membrane proton channel. F(1) has five subunits: alpha(3), beta(3), gamma(1), delta(1), epsilon(1). F(0) has three main subunits: a(1), b(2) and c(10-14). The alpha and beta chains form an alternating ring which encloses part of the gamma chain. F(1) is attached to F(0) by a central stalk formed by the gamma and epsilon chains, while a peripheral stalk is formed by the delta and b chains.

It localises to the cell inner membrane. In terms of biological role, f(1)F(0) ATP synthase produces ATP from ADP in the presence of a proton or sodium gradient. F-type ATPases consist of two structural domains, F(1) containing the extramembraneous catalytic core and F(0) containing the membrane proton channel, linked together by a central stalk and a peripheral stalk. During catalysis, ATP synthesis in the catalytic domain of F(1) is coupled via a rotary mechanism of the central stalk subunits to proton translocation. Component of the F(0) channel, it forms part of the peripheral stalk, linking F(1) to F(0). This is ATP synthase subunit b from Xanthomonas campestris pv. campestris (strain 8004).